Here is a 484-residue protein sequence, read N- to C-terminus: Probable autolysin PH (484 aa).

A Peptidase C51 domain is found at 5–148; the sequence is KNQAEKWFDN…YYDDPMYFIR (144 aa). The MurNAc-LAA domain maps to 181-363; the sequence is IMLVAGHGYN…YSKLIAGAIH (183 aa). The SH3b domain maps to 402 to 472; sequence KETGYYTVAN…IATGEVDKAG (71 aa).

It catalyses the reaction Hydrolyzes the link between N-acetylmuramoyl residues and L-amino acid residues in certain cell-wall glycopeptides.. Its function is as follows. Has weak lytic activity toward S.aureus cells. Full-length protein has no activity, but fusion of the Peptidase C51 domain to the lysostaphin SH3 cell wall binding domain yields an active chimeric enzyme, suggesting that PH may be functional. The protein is Probable autolysin PH of Staphylococcus aureus (strain NCTC 8325 / PS 47).